A 219-amino-acid chain; its full sequence is Dual specificity phosphatase 29 (219 aa).

The 149-residue stretch at 53 to 201 (HVNEVWPKLY…LRELDRQLVQ (149 aa)) folds into the Tyrosine-protein phosphatase domain. Substrate is bound at residue 145–152 (HCVMGRSR). Cys-146 acts as the Phosphocysteine intermediate in catalysis.

Belongs to the protein-tyrosine phosphatase family. Non-receptor class dual specificity subfamily. Homodimer. Interacts with PRKAA2.

Its subcellular location is the cytoplasm. The protein resides in the nucleus. It catalyses the reaction O-phospho-L-tyrosyl-[protein] + H2O = L-tyrosyl-[protein] + phosphate. The enzyme catalyses O-phospho-L-seryl-[protein] + H2O = L-seryl-[protein] + phosphate. The catalysed reaction is O-phospho-L-threonyl-[protein] + H2O = L-threonyl-[protein] + phosphate. Functionally, dual specificity phosphatase able to dephosphorylate phosphotyrosine, phosphoserine and phosphothreonine residues within the same substrate, with a preference for phosphotyrosine as a substrate. Involved in the modulation of intracellular signaling cascades. May regulate glucose metabolism by activating, AMPK, an energy sensor protein kinase. Affects MAP kinase signaling though modulation of the ERK1/2 cascade in skeletal muscle promoting muscle cell differentiation, development and atrophy. In Bos taurus (Bovine), this protein is Dual specificity phosphatase 29 (DUSP29).